A 622-amino-acid polypeptide reads, in one-letter code: MAAEKQVPGGGGGGGGGGGGGGGSGGGRGAGGEENKENERPSAGSKANREFGDSLSLEILQIIKESQQQHGLRHGDFQRYRGYCSRRQRRLRKTLNFKMGNRHKFTGKKVTEDLLTDNRYLLLVLMDAERAWSYAMQLKQEANTEPRKRFHLLSRLRKAVKHAEELERLCESNRVDAKTKLEAQAYTAYLSGMLRFEHQEWKAAIEAFNKCKTIYEKLASAFTEEQAVLYNQRVEEISPNIRYCAYNIGDQSAINELMQMRLRSGGTEGLLAEKLEALITQTRAKQAATMSEVEWRGRTVPVKIDKVRIFLLGLADNEAAIAQAESEETKERLFESMLSECRDAIQAVREELKPDQKQRDYTLDGESGKVSNLQYLHSYLTYIKLSTAIRRNENMAKGLQKALQQQPEDESKRSPRPQDLIRLYDIILQNLVELLQLPGLEEDRAFQKEIGLKTLVFKAYRCFFIAQSYVLVKKWSEALVLYDRVLKYANEVNSDAGAFRNSLKDLPDVQELITQVRSEKCSLQAAAILDASDSHQPETSSQVKDNKPLVERFETFCLDPSLVTKQANLVHFPPGFQPIPCKPLFFDLALNHVAFPPLEDKLEQKTKSGLTGYIKGIFGFRS.

The tract at residues 1–50 (MAAEKQVPGGGGGGGGGGGGGGGSGGGRGAGGEENKENERPSAGSKANRE) is disordered. Residues 1–231 (MAAEKQVPGG…FTEEQAVLYN (231 aa)) are RNA-binding. A compositionally biased stretch (gly residues) spans 8–30 (PGGGGGGGGGGGGGGGSGGGRGA). Over residues 31-40 (GGEENKENER) the composition is skewed to basic and acidic residues. Phosphoserine is present on residues S45 and S238. An N6-acetyllysine modification is found at K448. The required for interaction with SRP72 stretch occupies residues 564–592 (TKQANLVHFPPGFQPIPCKPLFFDLALNH).

Belongs to the SRP68 family. In terms of assembly, heterodimer with SRP72. SRP68/SRP72 heterodimer formation is stabilized by the presence of 7SL RNA. Component of a signal recognition particle complex that consists of a 7SL RNA molecule of 300 nucleotides and six protein subunits: SRP72, SRP68, SRP54, SRP19, SRP14 and SRP9. Within the SRP complex, interacts (via C-terminus) with SRP72.

It is found in the cytoplasm. The protein resides in the nucleus. Its subcellular location is the nucleolus. It localises to the endoplasmic reticulum. Functionally, component of the signal recognition particle (SRP) complex, a ribonucleoprotein complex that mediates the cotranslational targeting of secretory and membrane proteins to the endoplasmic reticulum (ER). The SRP complex interacts with the signal sequence in nascent secretory and membrane proteins and directs them to the membrane of the ER. The SRP complex targets the ribosome-nascent chain complex to the SRP receptor (SR), which is anchored in the ER, where SR compaction and GTPase rearrangement drive cotranslational protein translocation into the ER. Binds the signal recognition particle RNA (7S RNA), SRP72 binds to this complex subsequently. The SRP complex possibly participates in the elongation arrest function. The protein is Signal recognition particle subunit SRP68 (SRP68) of Canis lupus familiaris (Dog).